Here is a 376-residue protein sequence, read N- to C-terminus: Protein-tyrosine sulfotransferase 2 (376 aa).

The Cytoplasmic segment spans residues 1 to 8; it reads MRLSVRKV. A helical; Signal-anchor for type II membrane protein transmembrane segment spans residues 9 to 25; the sequence is LLAVGCALALVLAVQLG. Over 26–376 the chain is Lumenal; the sequence is QQVLECRAVL…NSTSPHLGSS (351 aa). 3'-phosphoadenylyl sulfate is bound at residue 77–81; the sequence is RSGTT. Cys95 and Cys155 form a disulfide bridge. Residue Glu98 is the Proton donor/acceptor of the active site. The segment at 100 to 104 is interaction with peptide substrate; sequence RIIPR. Positions 182, 190, and 194 each coordinate 3'-phosphoadenylyl sulfate. Cys224 and Cys232 are joined by a disulfide. 3'-phosphoadenylyl sulfate contacts are provided by residues Tyr237, 284-293, and Lys299; that span reads STDQVIKPVN. Residues Asn342 and Asn367 are each glycosylated (N-linked (GlcNAc...) asparagine).

Belongs to the protein sulfotransferase family. In terms of assembly, homodimer. Can also form heterodimers with TPST1. N-glycosylated.

The protein resides in the golgi apparatus membrane. The enzyme catalyses L-tyrosyl-[protein] + 3'-phosphoadenylyl sulfate = O-sulfo-L-tyrosine-[protein] + adenosine 3',5'-bisphosphate + H(+). Catalyzes the O-sulfation of tyrosine residues within acidic motifs of polypeptides, using 3'-phosphoadenylyl sulfate (PAPS) as cosubstrate. The protein is Protein-tyrosine sulfotransferase 2 (Tpst2) of Rattus norvegicus (Rat).